We begin with the raw amino-acid sequence, 508 residues long: Photosystem II CP47 reaction center protein (508 aa).

6 consecutive transmembrane segments (helical) span residues 21-36, 101-115, 140-156, 203-218, 237-252, and 457-472; these read SVHIMHTALVSGWAGS, IMLSGLCFLAAIWHW, GIHLFLAGVACFGFGAF, IAAGTLGILAGLFHLS, VLSSSIAAVFFAAFVV, and SFALLFFFGHIWHGAR.

This sequence belongs to the PsbB/PsbC family. PsbB subfamily. PSII is composed of 1 copy each of membrane proteins PsbA, PsbB, PsbC, PsbD, PsbE, PsbF, PsbH, PsbI, PsbJ, PsbK, PsbL, PsbM, PsbT, PsbX, PsbY, PsbZ, Psb30/Ycf12, at least 3 peripheral proteins of the oxygen-evolving complex and a large number of cofactors. It forms dimeric complexes. Binds multiple chlorophylls. PSII binds additional chlorophylls, carotenoids and specific lipids. serves as cofactor.

The protein resides in the plastid. It localises to the chloroplast thylakoid membrane. In terms of biological role, one of the components of the core complex of photosystem II (PSII). It binds chlorophyll and helps catalyze the primary light-induced photochemical processes of PSII. PSII is a light-driven water:plastoquinone oxidoreductase, using light energy to abstract electrons from H(2)O, generating O(2) and a proton gradient subsequently used for ATP formation. The polypeptide is Photosystem II CP47 reaction center protein (Piper cenocladum (Ant piper)).